Here is a 122-residue protein sequence, read N- to C-terminus: Elsinochromes biosynthesis cluster protein HP4 (122 aa).

In terms of biological role, part of the gene cluster that mediates the biosynthesis of elsinochromes, pigments consisting of at least four interconvertible tautomers (A, B, C and D) that have a core phenolic quinone to which various side chains are attached and which play an important role in fungal pathogenesis. The non-reducing polyketide synthase PKS1 was proposed to iteratively catalyze decarboxylation between acetyl-CoA and malonyl-CoA subunits for polyketide chain elongation. The released polyketide undergoes cyclization to form an aromatic ring, and proceeds via serial modification steps to produce the heptaketide back- bone of elsinochrome. As elsinochrome has a symmetrical structure, two identical heptaketides are fused to form a core 1,2-dihydrobenzo-perylene ring structure, which can then be successively modified to produce the various derivatives of elsinochrome. Some of these reactions may be cooperatively carried out, at least in part, by the products of RDT1, OXR1 and PKS1. PRF1, embedded within the elsinochrome cluster possibly functions to stabilize some of the biosynthetic enzymes required for elsinochrome production. As prefoldin is a hexamer containing 2 a and 4 b subunits, additional prefoldin subunits, whose coding genes may not immediately link to the elsinochrome biosynthetic gene cluster, are required to fulfill the chaperone function. In addition, no methyltransferase-coding gene exists within the biosynthetic gene cluster, even though elsinochrome has four methyl groups at positions C3, C7, C8 and C12. Apparently, the identified gene cluster does not contain the entire entourage of genes responsible for elsinochrome biosynthesis. Once elsinochrome is synthesized, it must be exported outside the fungal cells, which is probably accomplished by the ECT1 transporter, to avoid toxicity. In Elsinoe fawcettii (Citrus scab fungus), this protein is Elsinochromes biosynthesis cluster protein HP4.